Consider the following 1941-residue polypeptide: Myosin-2 (1941 aa).

A Myosin N-terminal SH3-like domain is found at 33 to 82 (DAKTSVFVAEPKESFVKGTIQSREGGKVTVKTEGGATLTVKDDQVFPMNP). Phosphothreonine occurs at positions 64 and 69. The Myosin motor domain maps to 86–784 (DKIEDMAMMT…LLGLLEEMRD (699 aa)). Lysine 130 is subject to N6,N6,N6-trimethyllysine. Position 179–186 (179–186 (GESGAGKT)) interacts with ATP. The residue at position 389 (tyrosine 389) is a Phosphotyrosine. Serine 392 is modified (phosphoserine). Threonine 419 bears the Phosphothreonine mark. At serine 625 the chain carries Phosphoserine. The interval 661–683 (LNKLMTNLRSTHPHFVRCIIPNE) is actin-binding. Pros-methylhistidine is present on histidine 759. Residues 763–777 (KFGHTKVFFKAGLLG) form an actin-binding region. The IQ domain maps to 787–816 (LAQLITRTQARCRGFLARVEYQRMVERREA). Residues 845-1941 (LLKSAETEKE…EVHTKVISEE (1097 aa)) adopt a coiled-coil conformation. Residues serine 1094 and serine 1098 each carry the phosphoserine modification. 2 disordered regions span residues 1128 to 1149 (IEAERASRAKAEKQRSDLSREL) and 1155 to 1174 (RLEEAGGATSAQIEMNKKRE). Over residues 1130–1149 (AERASRAKAEKQRSDLSREL) the composition is skewed to basic and acidic residues. Phosphoserine occurs at positions 1164 and 1239. Threonine 1243 carries the phosphothreonine modification. Serine 1245 is subject to Phosphoserine. A Phosphothreonine modification is found at threonine 1257. Serine 1263 bears the Phosphoserine mark. The residue at position 1288 (threonine 1288) is a Phosphothreonine. Phosphoserine is present on residues serine 1290, serine 1294, serine 1305, and serine 1308. Threonine 1469 carries the phosphothreonine modification. Serine 1476 is modified (phosphoserine). Tyrosine 1494 is modified (phosphotyrosine). At serine 1497 the chain carries Phosphoserine. Threonine 1503 carries the post-translational modification Phosphothreonine. Serine 1516 bears the Phosphoserine mark. Threonine 1519 is subject to Phosphothreonine. A phosphoserine mark is found at serine 1556, serine 1576, serine 1602, serine 1605, serine 1716, and serine 1728. Threonine 1732 and threonine 1738 each carry phosphothreonine. Serine 1741 bears the Phosphoserine mark.

The protein belongs to the TRAFAC class myosin-kinesin ATPase superfamily. Myosin family. As to quaternary structure, muscle myosin is a hexameric protein that consists of 2 heavy chain subunits (MHC), 2 alkali light chain subunits (MLC) and 2 regulatory light chain subunits (MLC-2). Interacts with GCSAM.

The protein resides in the cytoplasm. The protein localises to the myofibril. Myosins are actin-based motor molecules with ATPase activity essential for muscle contraction. This chain is Myosin-2, found in Homo sapiens (Human).